We begin with the raw amino-acid sequence, 551 residues long: Palmdelphin (551 aa).

Position 1 is an N-acetylmethionine (methionine 1). Residues 12–106 (QAITDKRKIQ…LQISTKEEAI (95 aa)) adopt a coiled-coil conformation. Residue lysine 125 forms a Glycyl lysine isopeptide (Lys-Gly) (interchain with G-Cter in SUMO2) linkage. Serine 135 bears the Phosphoserine mark. Lysine 179 participates in a covalent cross-link: Glycyl lysine isopeptide (Lys-Gly) (interchain with G-Cter in SUMO1); alternate. A Glycyl lysine isopeptide (Lys-Gly) (interchain with G-Cter in SUMO2); alternate cross-link involves residue lysine 179. Over residues 248-259 (ERNSKSPTEYHE) the composition is skewed to basic and acidic residues. The segment at 248 to 280 (ERNSKSPTEYHEPVYANPFYRPTTPQRETVTPG) is disordered. The span at 270-280 (TTPQRETVTPG) shows a compositional bias: polar residues. Residue threonine 271 is modified to Phosphothreonine. Residues serine 321, serine 370, serine 384, and serine 385 each carry the phosphoserine modification. Disordered stretches follow at residues 342–392 (TPQK…QEDE) and 449–535 (DEEE…EDPS). Residues 484 to 495 (KRSEASPHENTN) are compositionally biased toward basic and acidic residues. Residues serine 498, serine 515, and serine 520 each carry the phosphoserine modification.

It belongs to the paralemmin family. In terms of assembly, interacts with GLUL. In terms of processing, phosphorylated. In terms of tissue distribution, ubiquitous. Most abundant in cardiac and skeletal muscle.

It localises to the cytoplasm. Its subcellular location is the cell projection. The protein localises to the dendrite. It is found in the dendritic spine. The sequence is that of Palmdelphin (PALMD) from Homo sapiens (Human).